Here is a 124-residue protein sequence, read N- to C-terminus: Con-Ins Tx1 (124 aa).

Residues 1–24 (MTTSSYFLLVALGLLLYVFQSSFG) form the signal peptide. Intrachain disulfides connect Cys-29/Cys-107, Cys-41/Cys-110, Cys-53/Cys-123, and Cys-109/Cys-114. A 4-hydroxyproline; partial modification is found at Pro-34. The propeptide at 59–92 (EQGGANNARANTGRTSSLMKRRGFLSLLKKRGKR) is c peptide. At Glu-118 the chain carries 4-carboxyglutamate; partial.

It belongs to the insulin family. In terms of assembly, heterodimer of A and B chains; disulfide-linked. Expressed by the venom gland.

It localises to the secreted. In terms of biological role, this venom insulin facilitates prey capture by rapidly inducing hypoglycemic shock. Intraperitoneal injection of this peptide into zebrafish lowers blood glucose with the same potency than human insulin. In vivo, when applied to water, this peptide reduces overall locomotor activity of zebrafish larvae, observed as a significant decrease in the percentage of time spent swimming and movement frequency. The sequence is that of Con-Ins Tx1 from Conus textile (Cloth-of-gold cone).